The following is a 670-amino-acid chain: MAIVQTLPVPLEPARETATAPQTPAMGSVSSLISGRPCPGGPAPQRHHGVPGPTFFRQQDGLLRGGYEAQEPLCPAVPPRKTVPGNSFTYVNEDFRTESPPSPSSDVEDPREHQAHNAHLRGPPPKLIPVSGKLEKNMEKILIRPTAFKPVLPKPRGAPSLPGFLGPRAAGLSGSQGSLTQLFGGPASSSSSSSSSSAADKPLALSGWASGCPSGTLSDSGRNSLSSLPTYSTGGAEPTANSPGGHLPSHGPGRGPLPGPARGVPTGPSHSDSGRSSSSKSTGSLGARVAGGLLGSGARASPGSSSGGDRSPPPPPPPPPSDEALLHCVLEGKLRDREAELQQLRDSVDESEAAVCQAFGARQRRWPGEREDCASHAQQATQRVQRAQQLLQLQVFQLQQEKRQLQDDFAQLLQEREQLERRCATFEREQQELGPRLEETKWEVCQKSGEISLLKQQLKESQAELVQKGSELVALRVALREARAALRVSEGHARGLQEAARARELELEACSQELQRYRQEAEQLREKARHLDAEAAGLREPPVPPATTDPFLLAESDEAKVQRAAAGTGGSLRAQVERLRQELQREQRRGDEQRNSFEGERLAWQAEKEQVIRYQKQLQHNYVQMYRRNRQLEQELQQLSLELEARELADLGLSEPAPCICLEEITATEI.

Disordered regions lie at residues M1–G52, N92–S131, and P150–E323. The tract at residues M1–K333 is required for centrosomal localization. Residues A187–A199 are compositionally biased toward low complexity. Residues P213–T233 are compositionally biased toward polar residues. Low complexity-rich tracts occupy residues S242 to G251 and P260 to R310. A phosphoserine mark is found at S249 and S296. Over residues S311 to S321 the composition is skewed to pro residues. A coiled-coil region spans residues V329 to D650. The segment at S448–I670 is sufficient for interaction with CTNNB1. A sufficient for interaction with KATNB1 and for inhibition of katanin-mediated microtubule severing region spans residues I451 to I670. Residue S571 is modified to Phosphoserine. The Nuclear export signal signature appears at L632–L641.

Belongs to the LZTS2 family. In terms of assembly, interacts with CTNNB1. Interacts with KATNB1. Also interacts with gamma-tubulin and KIF23.

The protein resides in the cytoplasm. It is found in the cytoskeleton. It localises to the microtubule organizing center. Its subcellular location is the centrosome. Its function is as follows. Negative regulator of katanin-mediated microtubule severing and release from the centrosome. Required for central spindle formation and the completion of cytokinesis. May negatively regulate axonal outgrowth by preventing the formation of microtubule bundles that are necessary for transport within the elongating axon. Negative regulator of the Wnt signaling pathway. Represses beta-catenin-mediated transcriptional activation by promoting the nuclear exclusion of beta-catenin. This chain is Leucine zipper putative tumor suppressor 2 (Lzts2), found in Rattus norvegicus (Rat).